We begin with the raw amino-acid sequence, 428 residues long: UPF0229 protein YeaH (428 aa).

Residues 78–90 (GNDHFIQNDRIER) are compositionally biased toward basic and acidic residues. Residues 78 to 111 (GNDHFIQNDRIERPQGGGGGGSGSGQGQASQDGE) are disordered. The span at 92 to 103 (QGGGGGGSGSGQ) shows a compositional bias: gly residues.

It belongs to the UPF0229 family.

The chain is UPF0229 protein YeaH from Salmonella choleraesuis (strain SC-B67).